We begin with the raw amino-acid sequence, 393 residues long: LL-diaminopimelate aminotransferase (393 aa).

Residues Y14 and G41 each coordinate substrate. Pyridoxal 5'-phosphate contacts are provided by residues Y71, 104-105 (AK), Y128, N174, Y205, and 233-235 (SFS). K105, Y128, and N174 together coordinate substrate. K236 bears the N6-(pyridoxal phosphate)lysine mark. Residues R244 and N275 each contribute to the pyridoxal 5'-phosphate site. N275 and R369 together coordinate substrate.

It belongs to the class-I pyridoxal-phosphate-dependent aminotransferase family. LL-diaminopimelate aminotransferase subfamily. Homodimer. It depends on pyridoxal 5'-phosphate as a cofactor.

The catalysed reaction is (2S,6S)-2,6-diaminopimelate + 2-oxoglutarate = (S)-2,3,4,5-tetrahydrodipicolinate + L-glutamate + H2O + H(+). It participates in amino-acid biosynthesis; L-lysine biosynthesis via DAP pathway; LL-2,6-diaminopimelate from (S)-tetrahydrodipicolinate (aminotransferase route): step 1/1. Its function is as follows. Involved in the synthesis of meso-diaminopimelate (m-DAP or DL-DAP), required for both lysine and peptidoglycan biosynthesis. Catalyzes the direct conversion of tetrahydrodipicolinate to LL-diaminopimelate. The chain is LL-diaminopimelate aminotransferase from Chlamydia muridarum (strain MoPn / Nigg).